Consider the following 333-residue polypeptide: 1,5-anhydro-D-fructose reductase (333 aa).

NADP(+) contacts are provided by residues 9-12 (ASTI), 33-34 (SS), Arg38, 71-76 (TTNELH), 93-94 (EK), Asn120, 162-163 (WR), and Tyr283.

It belongs to the Gfo/Idh/MocA family. As to quaternary structure, monomer.

The enzyme catalyses 1,5-anhydro-D-mannitol + NADP(+) = 1,5-anhydro-D-fructose + NADPH + H(+). In terms of biological role, catalyzes the NADPH-specific reduction of 1,5-anhydro-D-fructose to 1,5-anhydro-D-mannitol. The polypeptide is 1,5-anhydro-D-fructose reductase (afr) (Rhizobium meliloti (strain 1021) (Ensifer meliloti)).